The chain runs to 353 residues: Phospho-N-acetylmuramoyl-pentapeptide-transferase (353 aa).

The next 10 helical transmembrane spans lie at 22–42 (FAFFIALCLSLFLMPKFITWA), 65–85 (TPTMGGLIFISSAVIASLFCI), 88–108 (DNIFAISALLCLILFCLIGLI), 129–149 (LLAQIIAGLICILPLYFSSEL), 161–181 (PLFDMEIFAIAFWILVLISSS), 192–212 (GLATVPSIFSLSTLGIFLYLS), 228–248 (GLGEVVIICAALIGALMGFLW), 256–276 (VFMGDSGSLALGGFIGFLAII), 281–301 (ILLLLIGFVFVLETVSVILQV), and 330–350 (KIIVRFWMIALLSNLLALASI).

It belongs to the glycosyltransferase 4 family. MraY subfamily. The cofactor is Mg(2+).

Its subcellular location is the cell inner membrane. It carries out the reaction UDP-N-acetyl-alpha-D-muramoyl-L-alanyl-gamma-D-glutamyl-meso-2,6-diaminopimeloyl-D-alanyl-D-alanine + di-trans,octa-cis-undecaprenyl phosphate = di-trans,octa-cis-undecaprenyl diphospho-N-acetyl-alpha-D-muramoyl-L-alanyl-D-glutamyl-meso-2,6-diaminopimeloyl-D-alanyl-D-alanine + UMP. The protein operates within cell wall biogenesis; peptidoglycan biosynthesis. Catalyzes the initial step of the lipid cycle reactions in the biosynthesis of the cell wall peptidoglycan: transfers peptidoglycan precursor phospho-MurNAc-pentapeptide from UDP-MurNAc-pentapeptide onto the lipid carrier undecaprenyl phosphate, yielding undecaprenyl-pyrophosphoryl-MurNAc-pentapeptide, known as lipid I. The protein is Phospho-N-acetylmuramoyl-pentapeptide-transferase of Campylobacter jejuni (strain RM1221).